An 842-amino-acid chain; its full sequence is Leucine--tRNA ligase (842 aa).

Positions Pro44 to His55 match the 'HIGH' region motif. The short motif at Lys619 to Ser623 is the 'KMSKS' region element. Lys622 contacts ATP.

Belongs to the class-I aminoacyl-tRNA synthetase family.

Its subcellular location is the cytoplasm. It carries out the reaction tRNA(Leu) + L-leucine + ATP = L-leucyl-tRNA(Leu) + AMP + diphosphate. In Borrelia duttonii (strain Ly), this protein is Leucine--tRNA ligase.